Reading from the N-terminus, the 253-residue chain is Imidazole glycerol phosphate synthase subunit HisF (253 aa).

Active-site residues include D11 and D130.

The protein belongs to the HisA/HisF family. In terms of assembly, heterodimer of HisH and HisF.

The protein resides in the cytoplasm. It catalyses the reaction 5-[(5-phospho-1-deoxy-D-ribulos-1-ylimino)methylamino]-1-(5-phospho-beta-D-ribosyl)imidazole-4-carboxamide + L-glutamine = D-erythro-1-(imidazol-4-yl)glycerol 3-phosphate + 5-amino-1-(5-phospho-beta-D-ribosyl)imidazole-4-carboxamide + L-glutamate + H(+). It participates in amino-acid biosynthesis; L-histidine biosynthesis; L-histidine from 5-phospho-alpha-D-ribose 1-diphosphate: step 5/9. Functionally, IGPS catalyzes the conversion of PRFAR and glutamine to IGP, AICAR and glutamate. The HisF subunit catalyzes the cyclization activity that produces IGP and AICAR from PRFAR using the ammonia provided by the HisH subunit. The sequence is that of Imidazole glycerol phosphate synthase subunit HisF from Cereibacter sphaeroides (strain KD131 / KCTC 12085) (Rhodobacter sphaeroides).